A 310-amino-acid chain; its full sequence is Tagatose-6-phosphate kinase (310 aa).

The protein belongs to the carbohydrate kinase PfkB family. LacC subfamily.

The enzyme catalyses D-tagatofuranose 6-phosphate + ATP = D-tagatofuranose 1,6-bisphosphate + ADP + H(+). It participates in carbohydrate metabolism; D-tagatose 6-phosphate degradation; D-glyceraldehyde 3-phosphate and glycerone phosphate from D-tagatose 6-phosphate: step 1/2. This is Tagatose-6-phosphate kinase from Streptococcus mutans serotype c (strain ATCC 700610 / UA159).